The following is a 241-amino-acid chain: MAGHSKWANIQHRKGRQDEKRGKIWTRIIREIVVAARAGGGDTAMNPRLRLAIDKAKAANMPADRIKYNVDKATGNQEGVSYEEIRYEGYGIGGAAIIIDTMTDNRVRTVAEVRHAFSKYGGNLGTDGSVSFQFKHCGQFMFAPGSSEDRIMEVALDAGAEDVVTDDDGTVEVLCAPPDFEAVQAALQAAGLVPELAEVTMRAENTVALDGEDAQRMQKLLDVLEDLDDTQAVFHNAELDE.

The disordered stretch occupies residues 1 to 20 (MAGHSKWANIQHRKGRQDEK).

This sequence belongs to the TACO1 family.

It localises to the cytoplasm. The sequence is that of Probable transcriptional regulatory protein Mpe_A1337 from Methylibium petroleiphilum (strain ATCC BAA-1232 / LMG 22953 / PM1).